The chain runs to 388 residues: MRALHFGAGNIGRGFIARVLLKSDFNLIFSDVDQNIINAINNYKKYKIKLIDNSFEKIININNISAINSYDPNVLNVISHVDLITTAAGVNALYKIASILIEGIILRINLKCKKPLNIIACENKIKATSFLKKIIFDKIPLKYHDYFDEYIGFVDCTIDTIVPTFSSFKEENSLFVIAENFKEWIVDVNQFKGMVPKIIDMTLSDNLTSFIDRKILTLNTGHAIAAYLGLMKNYKNICEAMSDFSIQRIVKDAMYESGLVLIKRYNFNKKDHLSYIDKIFVRFKNPFILDKLERIARNPLQKLSKDERLIQPFVEAMKYNLPYFNLVKGIAAALHYRNINDIQSIKLSSLIKEEGLEETLVKVCKLNANSNEIRIIISEYHSIIKDFL.

3–14 (ALHFGAGNIGRG) is an NAD(+) binding site.

Belongs to the mannitol dehydrogenase family.

It catalyses the reaction D-mannitol 1-phosphate + NAD(+) = beta-D-fructose 6-phosphate + NADH + H(+). The chain is Mannitol-1-phosphate 5-dehydrogenase from Buchnera aphidicola subsp. Schizaphis graminum (strain Sg).